The following is a 138-amino-acid chain: Acid shock protein (138 aa).

A signal peptide spans 1–21 (MKKVLALIVAATMGLSSVAFA). Positions 22–85 (ADAVAPAAAA…TKKAPAQKAQ (64 aa)) are excised as a propeptide. Positions 31-50 (APAATTTAAPAAAATKAPAK) are enriched in low complexity. The interval 31–138 (APAATTTAAP…ATKKAAPAAK (108 aa)) is disordered. Composition is skewed to basic residues over residues 51–77 (ATHH…KATK) and 122–131 (AAKKHHKATK).

The protein belongs to the Asr family. In terms of processing, proteolytic processing gives rise to the active protein.

Its subcellular location is the periplasm. Its function is as follows. Required for growth and/or survival at acidic conditions. This is Acid shock protein from Serratia proteamaculans (strain 568).